The sequence spans 155 residues: MKIQLIAVGTKMPDWVTKGFEEYQRRFPKDMPFELIEIPAGKRGKNADIKRILEQEGKAMLSACQKSRIITLDIPGKPWTTEQLAQQLEAWKHDGRNVALLIGGPEGLSPECKAATEQSWSLSPLTLPHPLVRIVVAESLYRAWSLSTNHPYHRE.

Residues Leu-72, Gly-103, and 122–127 (LSPLTL) each bind S-adenosyl-L-methionine.

Belongs to the RNA methyltransferase RlmH family. In terms of assembly, homodimer.

Its subcellular location is the cytoplasm. It carries out the reaction pseudouridine(1915) in 23S rRNA + S-adenosyl-L-methionine = N(3)-methylpseudouridine(1915) in 23S rRNA + S-adenosyl-L-homocysteine + H(+). Its function is as follows. Specifically methylates the pseudouridine at position 1915 (m3Psi1915) in 23S rRNA. The protein is Ribosomal RNA large subunit methyltransferase H of Histophilus somni (strain 2336) (Haemophilus somnus).